Reading from the N-terminus, the 859-residue chain is Photoactivated adenylate cyclase subunit beta (859 aa).

Residues 56–149 (LRRLMYLSKS…GRMYGDWHMK (94 aa)) form the BLUF 1 domain. The Guanylate cyclase 1 domain occupies 205–333 (VVTFIYLVEF…DCINTTSRIA (129 aa)). A disordered region spans residues 420–443 (RPPIFDDTPKGNPRPRTPGYGGRQ). Residues 471-563 (LTTLTYISQA…RVYPSEWTLT (93 aa)) enclose the BLUF 2 domain. A Guanylate cyclase 2 domain is found at 619–748 (VMLATDICSF…AVSARVMEVE (130 aa)). The tract at residues 813-859 (AARSGEKPLTEPEEAKPDFRVSPGRVRHGDSGRRSNSAQGKRSIQVR) is disordered. The span at 815-831 (RSGEKPLTEPEEAKPDF) shows a compositional bias: basic and acidic residues. The segment covering 846–859 (RSNSAQGKRSIQVR) has biased composition (polar residues).

The protein belongs to the adenylyl cyclase class-4/guanylyl cyclase family. As to quaternary structure, heterotetramer of two alpha and two beta subunits. The cofactor is FAD.

Its subcellular location is the cell projection. It is found in the cilium. The protein localises to the flagellum. It carries out the reaction ATP = 3',5'-cyclic AMP + diphosphate. Activity increased by up to 80-fold under blue light. In terms of biological role, acts as a blue light photoreceptor for the step-up photophobic response. Mediates photoavoidance. This Euglena gracilis protein is Photoactivated adenylate cyclase subunit beta.